We begin with the raw amino-acid sequence, 162 residues long: Ribosome maturation factor RimP (162 aa).

The protein belongs to the RimP family.

It localises to the cytoplasm. Functionally, required for maturation of 30S ribosomal subunits. The sequence is that of Ribosome maturation factor RimP from Beutenbergia cavernae (strain ATCC BAA-8 / DSM 12333 / CCUG 43141 / JCM 11478 / NBRC 16432 / NCIMB 13614 / HKI 0122).